The following is a 555-amino-acid chain: GPI-anchor transamidase component PIGS (555 aa).

The Cytoplasmic portion of the chain corresponds to 2–18; that stretch reads ATAGAAATDLEVVRGKR. A cardiolipin contacts are provided by R15 and R18. A helical transmembrane segment spans residues 19-39; that stretch reads AALFFAAVAILLGLPLWWKTT. Residues 40-517 lie on the Lumenal side of the membrane; the sequence is ETYRAPLPYS…LHLLYFPDDQ (478 aa). Residues N267 and N370 are each glycosylated (N-linked (GlcNAc...) asparagine). A helical transmembrane segment spans residues 518–532; that stretch reads KFAIYIPLFLPMAVP. The Cytoplasmic segment spans residues 533–555; sequence ILLSLVKIFLETHKSWKKPEKID.

Belongs to the PIGS family. As to quaternary structure, heteropentamer. Part of the GPI-anchor transamidase complex, consisting of PIGK, PIGT, PIGS, PIGU and GAA1.

Its subcellular location is the endoplasmic reticulum membrane. It participates in glycolipid biosynthesis; glycosylphosphatidylinositol-anchor biosynthesis. In terms of biological role, component of the glycosylphosphatidylinositol-anchor (GPI-anchor) transamidase (GPI-T) complex that catalyzes the formation of the linkage between a proprotein and a GPI-anchor and participates in GPI anchored protein biosynthesis. In Rattus norvegicus (Rat), this protein is GPI-anchor transamidase component PIGS.